The primary structure comprises 386 residues: Zinc finger CCCH domain-containing protein 2 (386 aa).

2 consecutive C3H1-type zinc fingers follow at residues 116–143 (HYSGTACPDFRKGGCKRGDACEYAHGVF) and 151–175 (RYRTQPCKDGTACRRRVCFFAHTPD). Disordered regions lie at residues 180–200 (LPAQQSSPRSVASSPLAESYD) and 220–252 (SSPTSTLMSPPKSPPSESPPLSPDGAAAIRRGS). Over residues 182–192 (AQQSSPRSVAS) the composition is skewed to polar residues. Residues 220–229 (SSPTSTLMSP) show a composition bias toward low complexity. The span at 230–241 (PKSPPSESPPLS) shows a compositional bias: pro residues.

It is found in the nucleus. In terms of biological role, involved in leaf senescence delay. May repress jasmonic acid (JA) signaling role in promoting leaf senescence. May regulate panicle development and pollination/fertilization process. The protein is Zinc finger CCCH domain-containing protein 2 of Oryza sativa subsp. japonica (Rice).